The sequence spans 623 residues: Kelch repeat and BTB domain-containing protein 11 (623 aa).

The interval methionine 1–valine 129 is disordered. The span at proline 12–alanine 31 shows a compositional bias: low complexity. A compositionally biased stretch (polar residues) spans cysteine 42–alanine 55. 4 positions are modified to phosphoserine: serine 64, serine 67, serine 87, and serine 107. Residues glutamate 79–leucine 91 are compositionally biased toward low complexity. In terms of domain architecture, BTB spans proline 140–methionine 196. Kelch repeat units lie at residues arginine 311–asparagine 359, tyrosine 360–glycine 412, histidine 413–cysteine 455, and glutamate 458–glycine 500.

This chain is Kelch repeat and BTB domain-containing protein 11 (KBTBD11), found in Homo sapiens (Human).